Consider the following 190-residue polypeptide: Endoribonuclease YbeY (190 aa).

The interval 1–20 (MDVENDRPPRRGAAGERNSG) is disordered. H147, H151, and H157 together coordinate Zn(2+).

This sequence belongs to the endoribonuclease YbeY family. Zn(2+) is required as a cofactor.

It is found in the cytoplasm. Functionally, single strand-specific metallo-endoribonuclease involved in late-stage 70S ribosome quality control and in maturation of the 3' terminus of the 16S rRNA. In Nitrobacter hamburgensis (strain DSM 10229 / NCIMB 13809 / X14), this protein is Endoribonuclease YbeY.